A 126-amino-acid polypeptide reads, in one-letter code: Histone H2B type 1-N (126 aa).

Low complexity predominate over residues 1 to 12 (MPEPSKSAPAPK). Residues 1 to 36 (MPEPSKSAPAPKKGSKKAVTKAQKKDGKKRKRSRKE) form a disordered region. Residue Pro-2 is modified to N-acetylproline. Glu-3 is modified (ADP-ribosyl glutamic acid). Lys-6 bears the N6-(2-hydroxyisobutyryl)lysine; alternate mark. Lys-6 is subject to N6-(beta-hydroxybutyryl)lysine; alternate. An N6-acetyllysine; alternate modification is found at Lys-6. At Lys-6 the chain carries N6-butyryllysine; alternate. Residue Lys-6 is modified to N6-crotonyllysine; alternate. N6-lactoyllysine; alternate is present on Lys-6. Lys-6 is covalently cross-linked (Glycyl lysine isopeptide (Lys-Gly) (interchain with G-Cter in SUMO2); alternate). Ser-7 bears the ADP-ribosylserine mark. Lys-12 bears the N6-(beta-hydroxybutyryl)lysine; alternate mark. N6-acetyllysine; alternate is present on residues Lys-12 and Lys-13. Residues Lys-12 and Lys-13 each carry the N6-crotonyllysine; alternate modification. Lys-12 carries the post-translational modification N6-lactoyllysine; alternate. N6-(2-hydroxyisobutyryl)lysine; alternate is present on Lys-13. Position 15 is a phosphoserine; by STK4/MST1 (Ser-15). Lys-16, Lys-17, Lys-21, and Lys-24 each carry N6-acetyllysine; alternate. N6-crotonyllysine; alternate occurs at positions 16, 17, 21, and 24. 4 positions are modified to N6-lactoyllysine; alternate: Lys-16, Lys-17, Lys-21, and Lys-24. Lys-17 is modified (N6-glutaryllysine; alternate). Lys-21 and Lys-24 each carry N6-(2-hydroxyisobutyryl)lysine; alternate. N6-(beta-hydroxybutyryl)lysine; alternate is present on Lys-21. Lys-21 carries the post-translational modification N6-butyryllysine; alternate. A Glycyl lysine isopeptide (Lys-Gly) (interchain with G-Cter in SUMO2); alternate cross-link involves residue Lys-21. Residue Lys-25 is modified to N6-(2-hydroxyisobutyryl)lysine. Lys-35 carries the post-translational modification N6-(2-hydroxyisobutyryl)lysine; alternate. An N6-(beta-hydroxybutyryl)lysine; alternate modification is found at Lys-35. The residue at position 35 (Lys-35) is an N6-crotonyllysine; alternate. Lys-35 carries the N6-glutaryllysine; alternate modification. Lys-35 carries the post-translational modification N6-succinyllysine; alternate. Lys-35 is covalently cross-linked (Glycyl lysine isopeptide (Lys-Gly) (interchain with G-Cter in ubiquitin); alternate). PolyADP-ribosyl glutamic acid is present on Glu-36. Ser-37 is subject to Phosphoserine; by AMPK. 3 positions are modified to N6-(2-hydroxyisobutyryl)lysine; alternate: Lys-44, Lys-47, and Lys-58. Lys-44 is subject to N6-lactoyllysine; alternate. 2 positions are modified to N6-glutaryllysine; alternate: Lys-44 and Lys-47. Lys-47 is subject to N6-methyllysine; alternate. Lys-58 carries the post-translational modification N6,N6-dimethyllysine; alternate. Arg-80 carries the post-translational modification Dimethylated arginine. Position 86 is an N6-(2-hydroxyisobutyryl)lysine; alternate (Lys-86). Residue Lys-86 is modified to N6-acetyllysine; alternate. N6-lactoyllysine; alternate is present on Lys-86. An N6,N6,N6-trimethyllysine; alternate modification is found at Lys-86. 2 positions are modified to omega-N-methylarginine: Arg-87 and Arg-93. The residue at position 109 (Lys-109) is an N6-(2-hydroxyisobutyryl)lysine; alternate. At Lys-109 the chain carries N6-lactoyllysine; alternate. At Lys-109 the chain carries N6-glutaryllysine; alternate. Lys-109 is subject to N6-methyllysine; alternate. Residue Ser-113 is glycosylated (O-linked (GlcNAc) serine). At Thr-116 the chain carries Phosphothreonine. 2 positions are modified to N6-(2-hydroxyisobutyryl)lysine; alternate: Lys-117 and Lys-121. Lys-117 is subject to N6-(beta-hydroxybutyryl)lysine; alternate. Lys-117 and Lys-121 each carry N6-lactoyllysine; alternate. Residues Lys-117 and Lys-121 each carry the N6-glutaryllysine; alternate modification. 2 positions are modified to N6-succinyllysine; alternate: Lys-117 and Lys-121. Position 117 is an N6-methylated lysine; alternate (Lys-117). Lys-121 participates in a covalent cross-link: Glycyl lysine isopeptide (Lys-Gly) (interchain with G-Cter in ubiquitin); alternate.

The protein belongs to the histone H2B family. As to quaternary structure, the nucleosome is a histone octamer containing two molecules each of H2A, H2B, H3 and H4 assembled in one H3-H4 heterotetramer and two H2A-H2B heterodimers. The octamer wraps approximately 147 bp of DNA. Monoubiquitination at Lys-35 (H2BK34Ub) by the MSL1/MSL2 dimer is required for histone H3 'Lys-4' (H3K4me) and 'Lys-79' (H3K79me) methylation and transcription activation at specific gene loci, such as HOXA9 and MEIS1 loci. Similarly, monoubiquitination at Lys-121 (H2BK120Ub) by the RNF20/40 complex gives a specific tag for epigenetic transcriptional activation and is also prerequisite for histone H3 'Lys-4' and 'Lys-79' methylation. It also functions cooperatively with the FACT dimer to stimulate elongation by RNA polymerase II. H2BK120Ub also acts as a regulator of mRNA splicing: deubiquitination by USP49 is required for efficient cotranscriptional splicing of a large set of exons. Post-translationally, phosphorylated on Ser-15 (H2BS14ph) by STK4/MST1 during apoptosis; which facilitates apoptotic chromatin condensation. Also phosphorylated on Ser-15 in response to DNA double strand breaks (DSBs), and in correlation with somatic hypermutation and immunoglobulin class-switch recombination. Phosphorylation at Ser-37 (H2BS36ph) by AMPK in response to stress promotes transcription. In terms of processing, glcNAcylation at Ser-113 promotes monoubiquitination of Lys-121. It fluctuates in response to extracellular glucose, and associates with transcribed genes. ADP-ribosylated by PARP1 or PARP2 on Ser-7 (H2BS6ADPr) in response to DNA damage. H2BS6ADPr promotes recruitment of CHD1L. Mono-ADP-ribosylated on Glu-3 (H2BE2ADPr) by PARP3 in response to single-strand breaks. Poly ADP-ribosylation on Glu-36 (H2BE35ADPr) by PARP1 regulates adipogenesis: it inhibits phosphorylation at Ser-37 (H2BS36ph), thereby blocking expression of pro-adipogenetic genes. Post-translationally, crotonylation (Kcr) is specifically present in male germ cells and marks testis-specific genes in post-meiotic cells, including X-linked genes that escape sex chromosome inactivation in haploid cells. Crotonylation marks active promoters and enhancers and confers resistance to transcriptional repressors. It is also associated with post-meiotically activated genes on autosomes. In terms of processing, lactylated in macrophages by EP300/P300 by using lactoyl-CoA directly derived from endogenous or exogenous lactate, leading to stimulates gene transcription.

It localises to the nucleus. The protein localises to the chromosome. Core component of nucleosome. Nucleosomes wrap and compact DNA into chromatin, limiting DNA accessibility to the cellular machineries which require DNA as a template. Histones thereby play a central role in transcription regulation, DNA repair, DNA replication and chromosomal stability. DNA accessibility is regulated via a complex set of post-translational modifications of histones, also called histone code, and nucleosome remodeling. This chain is Histone H2B type 1-N (H2BC15), found in Bos taurus (Bovine).